A 463-amino-acid chain; its full sequence is ATP synthase subunit beta (463 aa).

152 to 159 (GGAGVGKT) provides a ligand contact to ATP.

This sequence belongs to the ATPase alpha/beta chains family. F-type ATPases have 2 components, CF(1) - the catalytic core - and CF(0) - the membrane proton channel. CF(1) has five subunits: alpha(3), beta(3), gamma(1), delta(1), epsilon(1). CF(0) has three main subunits: a(1), b(2) and c(9-12). The alpha and beta chains form an alternating ring which encloses part of the gamma chain. CF(1) is attached to CF(0) by a central stalk formed by the gamma and epsilon chains, while a peripheral stalk is formed by the delta and b chains.

It is found in the cell inner membrane. The catalysed reaction is ATP + H2O + 4 H(+)(in) = ADP + phosphate + 5 H(+)(out). Produces ATP from ADP in the presence of a proton gradient across the membrane. The catalytic sites are hosted primarily by the beta subunits. In Shewanella sp. (strain ANA-3), this protein is ATP synthase subunit beta.